A 462-amino-acid chain; its full sequence is Indoleacetamide hydrolase (462 aa).

Active-site charge relay system residues include Lys-74 and Ser-149. Residue Ser-173 is the Acyl-ester intermediate of the active site.

This sequence belongs to the amidase family.

It participates in plant hormone metabolism; auxin biosynthesis. Hydrolyzes indole-3-acetamide (IAM) into indole-3-acetic acid (IAA). The polypeptide is Indoleacetamide hydrolase (iaaH) (Allorhizobium ampelinum (strain ATCC BAA-846 / DSM 112012 / S4) (Agrobacterium vitis (strain S4))).